Consider the following 462-residue polypeptide: 3beta-hydroxysteroid dehydrogenase/Delta(5)-Delta(4) isomerase 1 (462 aa).

Residues 51–56 (GGAGHL), Tyr-220, and Lys-224 each bind NAD(+). Residue Lys-224 is the Proton donor of the active site. 2 helical membrane-spanning segments follow: residues 321-341 (VGTF…SSMI) and 428-448 (VAVL…FTFW).

The protein belongs to the 3-beta-HSD family. As to expression, expressed exclusively in the neuron-like XXX(L/R) cells through all four larval stages and becomes fainter in adults.

The protein resides in the membrane. The catalysed reaction is a 3beta-hydroxy-Delta(5)-steroid + NAD(+) = a 3-oxo-Delta(5)-steroid + NADH + H(+). The enzyme catalyses cholesterol + NAD(+) = cholest-5-en-3-one + NADH + H(+). It carries out the reaction a 3-oxo-Delta(5)-steroid = a 3-oxo-Delta(4)-steroid. It catalyses the reaction cholest-5-en-3-one = cholest-4-en-3-one. Its pathway is steroid hormone biosynthesis; dafachronic acid biosynthesis. Functionally, hydroxysteroid dehydrogenase involved in the biosynthesis of dafrachonic acids. Catalyzes the dehydrogenation of cholesterol or its derivatives and the isomerization of the double carbon bond on the sterol ring. Modifies sterols into a Delta(4)-3-keto-sterols such as cholest-4-en-3-one, precursor of Delta(4)-dafachronic acid. Contributes to the production of Delta(7)-dafachronic acid in the XXX cells. Dafachronic acids act as ligands and bind directly to the nuclear hormone receptor (NHR) daf-12 suppressing dauer formation and inducing reproductive growth. Acts in parallel to AKT-1 to promote reproductive development via DAF-16/FoxO and DAF-12. The protein is 3beta-hydroxysteroid dehydrogenase/Delta(5)-Delta(4) isomerase 1 of Caenorhabditis elegans.